Consider the following 251-residue polypeptide: L,D-transpeptidase 1 (251 aa).

An N-terminal signal peptide occupies residues M1–A28. The region spanning L125–V250 is the L,D-TPase catalytic domain. Residues Y190 and S203 to G204 contribute to the substrate site. H208 serves as the catalytic Proton donor/acceptor. Catalysis depends on C226, which acts as the Nucleophile. Residue N228 coordinates substrate.

As to quaternary structure, monomer.

The protein localises to the periplasm. It participates in cell wall biogenesis; peptidoglycan biosynthesis. With respect to regulation, is irreversibly inactivated by the beta-lactams carbapenems via the formation of a covalent adduct resulting from acylation of the catalytic Cys. Functionally, generates 3-&gt;3 cross-links in peptidoglycan, catalyzing the cleavage of the mDap(3)-D-Ala(4) bond of a tetrapeptide donor stem and the formation of a bond between the carbonyl of mDap(3) of the donor stem and the side chain of mDap(3) of the acceptor stem. Is specific for donor substrates containing a stem tetrapeptide since it cannot use pentapeptide stems. In Mycobacterium tuberculosis (strain CDC 1551 / Oshkosh), this protein is L,D-transpeptidase 1 (ldtA).